Reading from the N-terminus, the 259-residue chain is Type III pantothenate kinase (259 aa).

6–13 (DVGNTNIV) is a binding site for ATP. Residues Tyr-100 and 107–110 (GADR) contribute to the substrate site. Asp-109 functions as the Proton acceptor in the catalytic mechanism. Asp-129 provides a ligand contact to K(+). An ATP-binding site is contributed by Thr-132. Thr-184 is a substrate binding site.

Belongs to the type III pantothenate kinase family. Homodimer. It depends on NH4(+) as a cofactor. K(+) is required as a cofactor.

The protein localises to the cytoplasm. The catalysed reaction is (R)-pantothenate + ATP = (R)-4'-phosphopantothenate + ADP + H(+). It participates in cofactor biosynthesis; coenzyme A biosynthesis; CoA from (R)-pantothenate: step 1/5. Functionally, catalyzes the phosphorylation of pantothenate (Pan), the first step in CoA biosynthesis. The sequence is that of Type III pantothenate kinase from Clostridium perfringens (strain 13 / Type A).